The primary structure comprises 547 residues: Glucose-6-phosphate isomerase (547 aa).

The active-site Proton donor is E353. Active-site residues include H384 and K512.

This sequence belongs to the GPI family.

The protein localises to the cytoplasm. It catalyses the reaction alpha-D-glucose 6-phosphate = beta-D-fructose 6-phosphate. It participates in carbohydrate biosynthesis; gluconeogenesis. Its pathway is carbohydrate degradation; glycolysis; D-glyceraldehyde 3-phosphate and glycerone phosphate from D-glucose: step 2/4. Its function is as follows. Catalyzes the reversible isomerization of glucose-6-phosphate to fructose-6-phosphate. The protein is Glucose-6-phosphate isomerase of Glaesserella parasuis serovar 5 (strain SH0165) (Haemophilus parasuis).